The sequence spans 691 residues: DNA ligase (691 aa).

NAD(+) contacts are provided by residues 53-57 (DSEYD), 102-103 (SL), and E135. The active-site N6-AMP-lysine intermediate is the K137. 4 residues coordinate NAD(+): R158, E195, K310, and K334. Residues C428, C431, C446, and C452 each contribute to the Zn(2+) site. The region spanning 613-691 (SEGLPLDGQT…EEEFLVLVGE (79 aa)) is the BRCT domain.

It belongs to the NAD-dependent DNA ligase family. LigA subfamily. Mg(2+) is required as a cofactor. The cofactor is Mn(2+).

It carries out the reaction NAD(+) + (deoxyribonucleotide)n-3'-hydroxyl + 5'-phospho-(deoxyribonucleotide)m = (deoxyribonucleotide)n+m + AMP + beta-nicotinamide D-nucleotide.. DNA ligase that catalyzes the formation of phosphodiester linkages between 5'-phosphoryl and 3'-hydroxyl groups in double-stranded DNA using NAD as a coenzyme and as the energy source for the reaction. It is essential for DNA replication and repair of damaged DNA. This Psychrobacter cryohalolentis (strain ATCC BAA-1226 / DSM 17306 / VKM B-2378 / K5) protein is DNA ligase.